The primary structure comprises 2944 residues: MTLRLLVAALCAGILAEAPRVRAQHRERVTCTRLYAADIVFLLDGSSSIGRSNFREVRSFLEGLVLPFSGAASAQGVRFATVQYSDDPRTEFGLDALGSGGDVIRAIRELSYKGGNTRTGAAILHVADHVFLPQLARPGVPKVCILITDGKSQDLVDTAAQRLKGQGVKLFAVGIKNADPEELKRVASQPTSDFFFFVNDFSILRTLLPLVSRRVCTTAGGVPVTRPPDDSTSAPRDLVLSEPSSQSLRVQWTAASGPVTGYKVQYTPLTGLGQPLPSERQEVNVPAGETSVRLRGLRPLTEYQVTVIALYANSIGEAVSGTARTTALEGPELTIQNTTAHSLLVAWRSVPGATGYRVTWRVLSGGPTQQQELGPGQGSVLLRDLEPGTDYEVTVSTLFGRSVGPATSLMARTDASVEQTLRPVILGPTSILLSWNLVPEARGYRLEWRRETGLEPPQKVVLPSDVTRYQLDGLQPGTEYRLTLYTLLEGHEVATPATVVPTGPELPVSPVTDLQATELPGQRVRVSWSPVPGATQYRIIVRSTQGVERTLVLPGSQTAFDLDDVQAGLSYTVRVSARVGPREGSASVLTVRREPETPLAVPGLRVVVSDATRVRVAWGPVPGASGFRISWSTGSGPESSQTLPPDSTATDITGLQPGTTYQVAVSVLRGREEGPAAVIVARTDPLGPVRTVHVTQASSSSVTITWTRVPGATGYRVSWHSAHGPEKSQLVSGEATVAELDGLEPDTEYTVHVRAHVAGVDGPPASVVVRTAPEPVGRVSRLQILNASSDVLRITWVGVTGATAYRLAWGRSEGGPMRHQILPGNTDSAEIRGLEGGVSYSVRVTALVGDREGTPVSIVVTTPPEAPPALGTLHVVQRGEHSLRLRWEPVPRAQGFLLHWQPEGGQEQSRVLGPELSSYHLDGLEPATQYRVRLSVLGPAGEGPSAEVTARTESPRVPSIELRVVDTSIDSVTLAWTPVSRASSYILSWRPLRGPGQEVPGSPQTLPGISSSQRVTGLEPGVSYIFSLTPVLDGVRGPEASVTQTPVCPRGLADVVFLPHATQDNAHRAEATRRVLERLVLALGPLGPQAVQVGLLSYSHRPSPLFPLNGSHDLGIILQRIRDMPYMDPSGNNLGTAVVTAHRYMLAPDAPGRRQHVPGVMVLLVDEPLRGDIFSPIREAQASGLNVVMLGMAGADPEQLRRLAPGMDSVQTFFAVDDGPSLDQAVSGLATALCQASFTTQPRPEPCPVYCPKGQKGEPGEMGLRGQVGPPGDPGLPGRTGAPGPQGPPGSATAKGERGFPGADGRPGSPGRAGNPGTPGAPGLKGSPGLPGPRGDPGERGPRGPKGEPGAPGQVIGGEGPGLPGRKGDPGPSGPPGPRGPLGDPGPRGPPGLPGTAMKGDKGDRGERGPPGPGEGGIAPGEPGLPGLPGSPGPQGPVGPPGKKGEKGDSEDGAPGLPGQPGSPGEQGPRGPPGAIGPKGDRGFPGPLGEAGEKGERGPPGPAGSRGLPGVAGRPGAKGPEGPPGPTGRQGEKGEPGRPGDPAVVGPAVAGPKGEKGDVGPAGPRGATGVQGERGPPGLVLPGDPGPKGDPGDRGPIGLTGRAGPPGDSGPPGEKGDPGRPGPPGPVGPRGRDGEVGEKGDEGPPGDPGLPGKAGERGLRGAPGVRGPVGEKGDQGDPGEDGRNGSPGSSGPKGDRGEPGPPGPPGRLVDTGPGAREKGEPGDRGQEGPRGPKGDPGLPGAPGERGIEGFRGPPGPQGDPGVRGPAGEKGDRGPPGLDGRSGLDGKPGAAGPSGPNGAAGKAGDPGRDGLPGLRGEQGLPGPSGPPGLPGKPGEDGKPGLNGKNGEPGDPGEDGRKGEKGDSGASGREGRDGPKGERGAPGILGPQGPPGLPGPVGPPGQGFPGVPGGTGPKGDRGETGSKGEQGLPGERGLRGEPGSVPNVDRLLETAGIKASALREIVETWDESSGSFLPVPERRRGPKGDSGEQGPPGKEGPIGFPGERGLKGDRGDPGPQGPPGLALGERGPPGPSGLAGEPGKPGIPGLPGRAGGVGEAGRPGERGERGEKGERGEQGRDGPPGLPGTPGPPGPPGPKVSVDEPGPGLSGEQGPPGLKGAKGEPGSNGDQGPKGDRGVPGIKGDRGEPGPRGQDGNPGLPGERGMAGPEGKPGLQGPRGPPGPVGGHGDPGPPGAPGLAGPAGPQGPSGLKGEPGETGPPGRGLTGPTGAVGLPGPPGPSGLVGPQGSPGLPGQVGETGKPGAPGRDGASGKDGDRGSPGVPGSPGLPGPVGPKGEPGPTGAPGQAVVGLPGAKGEKGAPGGLAGDLVGEPGAKGDRGLPGPRGEKGEAGRAGEPGDPGEDGQKGAPGPKGFKGDPGVGVPGSPGPPGPPGVKGDLGLPGLPGAPGVVGFPGQTGPRGEMGQPGPSGERGLAGPPGREGIPGPLGPPGPPGSVGPPGASGLKGDKGDPGVGLPGPRGERGEPGIRGEDGRPGQEGPRGLTGPPGSRGERGEKGDVGSAGLKGDKGDSAVILGPPGPRGAKGDMGERGPRGLDGDKGPRGDNGDPGDKGSKGEPGDKGSAGLPGLRGLLGPQGQPGAAGIPGDPGSPGKDGVPGIRGEKGDVGFMGPRGLKGERGVKGACGLDGEKGDKGEAGPPGRPGLAGHKGEMGEPGVPGQSGAPGKEGLIGPKGDRGFDGQPGPKGDQGEKGERGTPGIGGFPGPSGNDGSAGPPGPPGSVGPRGPEGLQGQKGERGPPGERVVGAPGVPGAPGERGEQGRPGPAGPRGEKGEAALTEDDIRGFVRQEMSQHCACQGQFIASGSRPLPSYAADTAGSQLHAVPVLRVSHAEEEERVPPEDDEYSEYSEYSVEEYQDPEAPWDSDDPCSLPLDEGSCTAYTLRWYHRAVTGSTEACHPFVYGGCGGNANRFGTREACERRCPPRVVQSQGTGTAQD.

Residues 1–16 form the signal peptide; the sequence is MTLRLLVAALCAGILA. The segment at 17-1253 is nonhelical region (NC1); it reads EAPRVRAQHR…PEPCPVYCPK (1237 aa). One can recognise a VWFA 1 domain in the interval 38–211; the sequence is DIVFLLDGSS…SILRTLLPLV (174 aa). Fibronectin type-III domains lie at 234–329, 330–416, 417–507, 510–597, 600–687, 688–775, 778–866, 869–957, and 958–1051; these read APRD…TALE, GPEL…TDAS, VEQT…PELP, PVTD…EPET, AVPG…DPLG, PVRT…APEP, RVSR…PPEA, ALGT…SPRV, and PSIE…CPRG. N337 is a glycosylation site (N-linked (GlcNAc...) asparagine). Residues 632–651 are disordered; sequence STGSGPESSQTLPPDSTATD. N786 carries an N-linked (GlcNAc...) asparagine glycan. In terms of domain architecture, VWFA 2 spans 1054 to 1229; it reads DVVFLPHATQ…PSLDQAVSGL (176 aa). N-linked (GlcNAc...) asparagine glycosylation occurs at N1109. Short sequence motifs (cell attachment site) lie at residues 1170–1172 and 1334–1336; these read RGD. Disordered stretches follow at residues 1239-1941, 1963-2782, and 2837-2872; these read TTQP…SVPN, WDES…EKGE, and SHAE…PWDS. Positions 1254 to 1477 are interrupted collagenous region; that stretch reads GQKGEPGEMG…GPRGPPGAIG (224 aa). Positions 1254–2784 are triple-helical region; that stretch reads GQKGEPGEMG…GPRGEKGEAA (1531 aa). The span at 1336–1346 shows a compositional bias: basic and acidic residues; it reads DPGERGPRGPK. Over residues 1355-1365 the composition is skewed to gly residues; that stretch reads VIGGEGPGLPG. Positions 1399–1408 are enriched in basic and acidic residues; sequence KGDKGDRGER. A compositionally biased stretch (pro residues) spans 1429-1440; sequence PGSPGPQGPVGP. Low complexity predominate over residues 1574–1583; sequence RGPPGLVLPG. Composition is skewed to basic and acidic residues over residues 1630–1642, 1669–1683, and 1715–1733; these read RGRD…KGDE, VGEK…EDGR, and AREK…RGPK. Low complexity predominate over residues 1786–1802; the sequence is KPGAAGPSGPNGAAGKA. Positions 1852-1877 are enriched in basic and acidic residues; sequence EDGRKGEKGDSGASGREGRDGPKGER. Pro residues predominate over residues 1886 to 1897; it reads QGPPGLPGPVGP. A compositionally biased stretch (gly residues) spans 1898–1911; the sequence is PGQGFPGVPGGTGP. The span at 1974-1984 shows a compositional bias: basic and acidic residues; sequence PERRRGPKGDS. Residues 2008 to 2010 carry the Cell attachment site motif; sequence RGD. 2 positions are modified to 4-hydroxyproline: P2036 and P2039. Residues 2046–2055 are compositionally biased toward gly residues; that stretch reads GRAGGVGEAG. A compositionally biased stretch (basic and acidic residues) spans 2056 to 2074; it reads RPGERGERGEKGERGEQGR. Positions 2078–2092 are enriched in pro residues; it reads PGLPGTPGPPGPPGP. 4-hydroxyproline occurs at positions 2084, 2087, and 2090. Positions 2127-2143 are enriched in basic and acidic residues; it reads PKGDRGVPGIKGDRGEP. P2167, P2176, P2185, and P2188 each carry 4-hydroxyproline. Composition is skewed to low complexity over residues 2191 to 2206 and 2235 to 2250; these read PGLA…SGLK and SGLV…PGQV. The span at 2328 to 2346 shows a compositional bias: basic and acidic residues; the sequence is AKGDRGLPGPRGEKGEAGR. Residues 2387-2406 are compositionally biased toward low complexity; the sequence is VKGDLGLPGLPGAPGVVGFP. Pro residues predominate over residues 2438 to 2448; sequence PLGPPGPPGSV. Basic and acidic residues-rich tracts occupy residues 2471–2486 and 2534–2570; these read RGER…DGRP and AKGD…EPGD. The short motif at 2553-2555 is the Cell attachment site element; that stretch reads RGD. Low complexity predominate over residues 2573 to 2601; sequence SAGLPGLRGLLGPQGQPGAAGIPGDPGSP. 2 positions are modified to 5-hydroxylysine; alternate: K2625 and K2631. O-linked (Gal...) hydroxylysine; alternate glycosylation is found at K2625 and K2631. 4-hydroxyproline occurs at positions 2664, 2667, and 2673. Over residues 2704 to 2713 the composition is skewed to gly residues; sequence GTPGIGGFPG. Residues 2749–2762 show a composition bias toward low complexity; the sequence is GERVVGAPGVPGAP. A nonhelical region (NC2) region spans residues 2785 to 2944; it reads LTEDDIRGFV…QSQGTGTAQD (160 aa). The span at 2837 to 2847 shows a compositional bias: basic and acidic residues; that stretch reads SHAEEEERVPP. A compositionally biased stretch (acidic residues) spans 2848–2872; sequence EDDEYSEYSEYSVEEYQDPEAPWDS. Residues 2872 to 2944 enclose the BPTI/Kunitz inhibitor domain; sequence SDDPCSLPLD…QSQGTGTAQD (73 aa). Disulfide bonds link C2876/C2929, C2885/C2912, and C2904/C2925.

Homotrimer. Interacts with MIA3/TANGO1; facilitating its loading into transport carriers and subsequent secretion. In terms of processing, prolines at the third position of the tripeptide repeating unit (G-X-Y) are hydroxylated in some or all of the chains.

The protein resides in the secreted. It localises to the extracellular space. It is found in the extracellular matrix. The protein localises to the basement membrane. Functionally, stratified squamous epithelial basement membrane protein that forms anchoring fibrils which may contribute to epithelial basement membrane organization and adherence by interacting with extracellular matrix (ECM) proteins such as type IV collagen. In Homo sapiens (Human), this protein is Collagen alpha-1(VII) chain (COL7A1).